Consider the following 543-residue polypeptide: Bifunctional riboflavin biosynthesis protein RIBA 1, chloroplastic (543 aa).

The transit peptide at 1–56 (MSSINLSSSSPSTISLSRSRLSQSSTTLLHGLHRVTLPSNHPLSTFSIKTNTGKVK) directs the protein to the chloroplast. The tract at residues 57–328 (AAVISREDDL…IADLIRYRRK (272 aa)) is DHBP synthase. D-ribulose 5-phosphate-binding positions include 152–153 (RE), aspartate 157, 267–271 (RAGHT), and glutamate 291. Glutamate 153 contributes to the Mg(2+) binding site. Mg(2+) is bound at residue histidine 270. Residues 329 to 543 (RDKLVERASA…VEKIESESES (215 aa)) are GTP cyclohydrolase II. Residue 379-383 (RVHSE) participates in GTP binding. Residues cysteine 384, cysteine 395, and cysteine 397 each coordinate Zn(2+). Residues glutamine 400, 423 to 425 (EGR), and threonine 445 each bind GTP. The active-site Proton acceptor; for GTP cyclohydrolase activity is the aspartate 457. Arginine 459 acts as the Nucleophile; for GTP cyclohydrolase activity in catalysis. Threonine 480 and lysine 485 together coordinate GTP.

It in the N-terminal section; belongs to the DHBP synthase family. In the C-terminal section; belongs to the GTP cyclohydrolase II family. The cofactor is Mg(2+). It depends on Mn(2+) as a cofactor. Zn(2+) serves as cofactor. In terms of tissue distribution, expressed in leaves, shoots, roots, flowers and siliques.

Its subcellular location is the plastid. It is found in the chloroplast. The enzyme catalyses D-ribulose 5-phosphate = (2S)-2-hydroxy-3-oxobutyl phosphate + formate + H(+). It catalyses the reaction GTP + 4 H2O = 2,5-diamino-6-hydroxy-4-(5-phosphoribosylamino)-pyrimidine + formate + 2 phosphate + 3 H(+). Its pathway is cofactor biosynthesis; riboflavin biosynthesis; 2-hydroxy-3-oxobutyl phosphate from D-ribulose 5-phosphate: step 1/1. It participates in cofactor biosynthesis; riboflavin biosynthesis; 5-amino-6-(D-ribitylamino)uracil from GTP: step 1/4. Functionally, involved in riboflavin biosynthesis. Catalyzes both the conversion of D-ribulose 5-phosphate to formate and 3,4-dihydroxy-2-butanone 4-phosphate and the conversion of GTP to 2,5-diamino-6-ribosylamino-4(3H)-pyrimidinone 5'-phosphate (DARP), formate and pyrophosphate. RIBA2 and RIBA3 together are not able to complement the loss of function of RIBA1. The sequence is that of Bifunctional riboflavin biosynthesis protein RIBA 1, chloroplastic (RIBA1) from Arabidopsis thaliana (Mouse-ear cress).